We begin with the raw amino-acid sequence, 324 residues long: MKPSIILYKTLPDDLLHRLEAHFTVTQVPNLHPETVARHAQAFASAQGLLGTSETVNRALLEKMPALRAASTISVGYDNVEVDALTARKIVLMHTPTVLTETVADTVMALMLATARRVVDVAERVKAGEWTESIGPAWFGVDVHHKTLGIVGMGRIGMALAQRAHFGFTMPVLYHARRRHQEAEDRFNARYCDLDTLLQEADFVCVILPLTTETRHLFGTTQFARMKSSAIFINAGRGPVVDENALIAALQNGEIYAAGLDVFEHEPLSVDSPLLNMSNVVAVPHIGSATHETRYNMMACAVDNLIDALQGKIEKNCVNPQAAG.

Residues arginine 237 and glutamate 266 contribute to the active site. Residue histidine 285 is the Proton donor of the active site.

The protein belongs to the D-isomer specific 2-hydroxyacid dehydrogenase family. GhrB subfamily. As to quaternary structure, homodimer.

It localises to the cytoplasm. It catalyses the reaction glycolate + NADP(+) = glyoxylate + NADPH + H(+). The enzyme catalyses (R)-glycerate + NAD(+) = 3-hydroxypyruvate + NADH + H(+). The catalysed reaction is (R)-glycerate + NADP(+) = 3-hydroxypyruvate + NADPH + H(+). Its function is as follows. Catalyzes the NADPH-dependent reduction of glyoxylate and hydroxypyruvate into glycolate and glycerate, respectively. The chain is Glyoxylate/hydroxypyruvate reductase B from Salmonella paratyphi B (strain ATCC BAA-1250 / SPB7).